Consider the following 388-residue polypeptide: Succinate--CoA ligase [ADP-forming] subunit beta (388 aa).

An ATP-grasp domain is found at 9-244; it reads KKLFAEYGLP…PSQDDPREAH (236 aa). Residues Lys-46, 53 to 55, Glu-99, Thr-102, and Glu-107 each bind ATP; that span reads GRG. Residues Asn-199 and Asp-213 each coordinate Mg(2+). Substrate contacts are provided by residues Asn-264 and 321-323; that span reads GIV.

This sequence belongs to the succinate/malate CoA ligase beta subunit family. As to quaternary structure, heterotetramer of two alpha and two beta subunits. It depends on Mg(2+) as a cofactor.

The catalysed reaction is succinate + ATP + CoA = succinyl-CoA + ADP + phosphate. The enzyme catalyses GTP + succinate + CoA = succinyl-CoA + GDP + phosphate. The protein operates within carbohydrate metabolism; tricarboxylic acid cycle; succinate from succinyl-CoA (ligase route): step 1/1. Functionally, succinyl-CoA synthetase functions in the citric acid cycle (TCA), coupling the hydrolysis of succinyl-CoA to the synthesis of either ATP or GTP and thus represents the only step of substrate-level phosphorylation in the TCA. The beta subunit provides nucleotide specificity of the enzyme and binds the substrate succinate, while the binding sites for coenzyme A and phosphate are found in the alpha subunit. The protein is Succinate--CoA ligase [ADP-forming] subunit beta of Aeromonas salmonicida (strain A449).